A 102-amino-acid polypeptide reads, in one-letter code: Neuropeptide F (102 aa).

An N-terminal signal peptide occupies residues 1–29; sequence MSNTMRCILIVCVALTLIAAGCNVEASNS. The propeptide occupies 30–32; the sequence is RPP. At F62 the chain carries Phenylalanine amide. Residues 66-102 constitute a propeptide that is removed on maturation; that stretch reads GGPLMEMLRNRELENNMAKSINSGGELIRALDEEEVF.

It belongs to the NPY family.

The protein localises to the secreted. Its function is as follows. An integral part of the sensory system that mediates food signaling, providing the neural basis for the regulation of food response; coordinates larval foraging and social behavior changes during development. May have a hormonal role in females. In Drosophila pseudoobscura pseudoobscura (Fruit fly), this protein is Neuropeptide F.